A 550-amino-acid chain; its full sequence is Calcyphosin-2 (550 aa).

Disordered stretches follow at residues 1 to 20 and 175 to 198; these read MVPPLDLGSLVDSDEEDNFS and ISDPEQDLNTKNQESSRVPPDSER. Over residues 181–190 the composition is skewed to polar residues; sequence DLNTKNQESS. EF-hand domains are found at residues 379–414, 415–452, and 453–488; these read RILTGLGRYFQGLDKEGNGLLEKADFQQALKTFHLE, VSEQDFESFWLILQGYGHSKNKVDYGEFKRAIFGEMNE, and YRKSFVRKAFMQLDFNKTGIVSVIDIRKCYCAKKHP. The Ca(2+) site is built by Asp-466, Asn-468, Thr-470, and Asp-477.

The polypeptide is Calcyphosin-2 (Caps2) (Mus musculus (Mouse)).